The sequence spans 146 residues: Phage-like element PBSX protein XkdJ (146 aa).

To B.subtilis YqbJ.

The chain is Phage-like element PBSX protein XkdJ (xkdJ) from Bacillus subtilis (strain 168).